Consider the following 375-residue polypeptide: Methylthioribose-1-phosphate isomerase (375 aa).

Residue aspartate 257 is the Proton donor of the active site.

The protein belongs to the eIF-2B alpha/beta/delta subunits family. MtnA subfamily.

The protein resides in the cytoplasm. Its subcellular location is the nucleus. The catalysed reaction is 5-(methylsulfanyl)-alpha-D-ribose 1-phosphate = 5-(methylsulfanyl)-D-ribulose 1-phosphate. The protein operates within amino-acid biosynthesis; L-methionine biosynthesis via salvage pathway; L-methionine from S-methyl-5-thio-alpha-D-ribose 1-phosphate: step 1/6. Functionally, catalyzes the interconversion of methylthioribose-1-phosphate (MTR-1-P) into methylthioribulose-1-phosphate (MTRu-1-P). This is Methylthioribose-1-phosphate isomerase from Leishmania infantum.